A 166-amino-acid polypeptide reads, in one-letter code: Protein FAM163B (166 aa).

A helical transmembrane segment spans residues 6-26; the sequence is VVITGGILATVILLCIIAVLC. A Phosphoserine modification is found at S40.

It belongs to the FAM163 family.

It localises to the membrane. The sequence is that of Protein FAM163B (FAM163B) from Homo sapiens (Human).